Consider the following 697-residue polypeptide: Methionine--tRNA ligase (697 aa).

The 'HIGH' region signature appears at Pro-11 to His-21. Zn(2+) is bound by residues Cys-142, Cys-145, Cys-155, and Cys-158. The short motif at Lys-343–Ser-347 is the 'KMSKS' region element. Position 346 (Lys-346) interacts with ATP. The region spanning Asp-595 to Ala-697 is the tRNA-binding domain.

The protein belongs to the class-I aminoacyl-tRNA synthetase family. MetG type 1 subfamily. As to quaternary structure, homodimer. Requires Zn(2+) as cofactor.

It is found in the cytoplasm. It catalyses the reaction tRNA(Met) + L-methionine + ATP = L-methionyl-tRNA(Met) + AMP + diphosphate. In terms of biological role, is required not only for elongation of protein synthesis but also for the initiation of all mRNA translation through initiator tRNA(fMet) aminoacylation. In Psychrobacter sp. (strain PRwf-1), this protein is Methionine--tRNA ligase.